Consider the following 218-residue polypeptide: uncharacterized protein (218 aa).

Positions 1–17 (MLKKIIILFLGIFLLSS) are cleaved as a signal peptide. C18 is lipidated: N-palmitoyl cysteine. The S-diacylglycerol cysteine moiety is linked to residue C18. The stretch at 136–164 (YKEKKIEEELNQIKAMLKETKRDITKYTC) forms a coiled coil.

Its subcellular location is the cell membrane. This is an uncharacterized protein from Rickettsia typhi (strain ATCC VR-144 / Wilmington).